The primary structure comprises 117 residues: Large ribosomal subunit protein bL19 (117 aa).

The protein belongs to the bacterial ribosomal protein bL19 family.

Its function is as follows. This protein is located at the 30S-50S ribosomal subunit interface and may play a role in the structure and function of the aminoacyl-tRNA binding site. In Vibrio vulnificus (strain CMCP6), this protein is Large ribosomal subunit protein bL19.